We begin with the raw amino-acid sequence, 164 residues long: Protein-export protein SecB (164 aa).

The protein belongs to the SecB family. Homotetramer, a dimer of dimers. One homotetramer interacts with 1 SecA dimer.

It is found in the cytoplasm. Its function is as follows. One of the proteins required for the normal export of preproteins out of the cell cytoplasm. It is a molecular chaperone that binds to a subset of precursor proteins, maintaining them in a translocation-competent state. It also specifically binds to its receptor SecA. This Janthinobacterium sp. (strain Marseille) (Minibacterium massiliensis) protein is Protein-export protein SecB.